The chain runs to 1199 residues: DNA-directed RNA polymerase subunit beta (1199 aa).

Positions Glu1177–Glu1199 are disordered.

The protein belongs to the RNA polymerase beta chain family. The RNAP catalytic core consists of 2 alpha, 1 beta, 1 beta' and 1 omega subunit. When a sigma factor is associated with the core the holoenzyme is formed, which can initiate transcription.

It carries out the reaction RNA(n) + a ribonucleoside 5'-triphosphate = RNA(n+1) + diphosphate. Functionally, DNA-dependent RNA polymerase catalyzes the transcription of DNA into RNA using the four ribonucleoside triphosphates as substrates. The chain is DNA-directed RNA polymerase subunit beta from Ligilactobacillus salivarius (strain UCC118) (Lactobacillus salivarius).